Reading from the N-terminus, the 194-residue chain is NADH-quinone oxidoreductase subunit B 1 (194 aa).

The segment covering Met-1 to Val-12 has biased composition (polar residues). Residues Met-1–Ser-23 form a disordered region. The [4Fe-4S] cluster site is built by Cys-73, Cys-74, Cys-138, and Cys-168.

It belongs to the complex I 20 kDa subunit family. In terms of assembly, NDH-1 is composed of 14 different subunits. Subunits NuoB, C, D, E, F, and G constitute the peripheral sector of the complex. The cofactor is [4Fe-4S] cluster.

Its subcellular location is the cell inner membrane. It catalyses the reaction a quinone + NADH + 5 H(+)(in) = a quinol + NAD(+) + 4 H(+)(out). Functionally, NDH-1 shuttles electrons from NADH, via FMN and iron-sulfur (Fe-S) centers, to quinones in the respiratory chain. The immediate electron acceptor for the enzyme in this species is believed to be ubiquinone. Couples the redox reaction to proton translocation (for every two electrons transferred, four hydrogen ions are translocated across the cytoplasmic membrane), and thus conserves the redox energy in a proton gradient. The sequence is that of NADH-quinone oxidoreductase subunit B 1 from Rhizobium etli (strain ATCC 51251 / DSM 11541 / JCM 21823 / NBRC 15573 / CFN 42).